A 507-amino-acid chain; its full sequence is Probable lipid II flippase MurJ (507 aa).

Helical transmembrane passes span 3–23, 54–74, 92–112, 132–152, 156–176, 185–205, 268–288, 310–330, 351–371, 379–399, 405–425, 438–458, and 472–492; these read LFRS…FGLV, IFAE…KMLI, LTLI…ILCI, ITIP…ILNS, FAAF…FTLI, ISIS…MFIC, IYQF…LPEM, IGLL…HPIT, ISAF…TPIF, TPLK…LLLM, IGIA…LYSY, IKLF…IIAL, and LLIK…IFFG.

This sequence belongs to the MurJ/MviN family.

It localises to the cell inner membrane. It participates in cell wall biogenesis; peptidoglycan biosynthesis. Functionally, involved in peptidoglycan biosynthesis. Transports lipid-linked peptidoglycan precursors from the inner to the outer leaflet of the cytoplasmic membrane. The polypeptide is Probable lipid II flippase MurJ (Rickettsia prowazekii (strain Madrid E)).